A 941-amino-acid chain; its full sequence is Isoleucine--tRNA ligase (941 aa).

A 'HIGH' region motif is present at residues 58 to 68 (PYANGDIHIGH). Glu563 lines the L-isoleucyl-5'-AMP pocket. The short motif at 604–608 (KMSKS) is the 'KMSKS' region element. Residue Lys607 participates in ATP binding. Zn(2+)-binding residues include Cys904, Cys907, Cys924, and Cys927.

This sequence belongs to the class-I aminoacyl-tRNA synthetase family. IleS type 1 subfamily. As to quaternary structure, monomer. It depends on Zn(2+) as a cofactor.

The protein localises to the cytoplasm. It catalyses the reaction tRNA(Ile) + L-isoleucine + ATP = L-isoleucyl-tRNA(Ile) + AMP + diphosphate. Its function is as follows. Catalyzes the attachment of isoleucine to tRNA(Ile). As IleRS can inadvertently accommodate and process structurally similar amino acids such as valine, to avoid such errors it has two additional distinct tRNA(Ile)-dependent editing activities. One activity is designated as 'pretransfer' editing and involves the hydrolysis of activated Val-AMP. The other activity is designated 'posttransfer' editing and involves deacylation of mischarged Val-tRNA(Ile). The chain is Isoleucine--tRNA ligase from Halorhodospira halophila (strain DSM 244 / SL1) (Ectothiorhodospira halophila (strain DSM 244 / SL1)).